The chain runs to 166 residues: Putative tRNA (cytidine(34)-2'-O)-methyltransferase (166 aa).

Positions 83, 109, 130, and 138 each coordinate S-adenosyl-L-methionine.

The protein belongs to the class IV-like SAM-binding methyltransferase superfamily. RNA methyltransferase TrmH family. TrmL subfamily.

It localises to the cytoplasm. It carries out the reaction cytidine(34) in tRNA + S-adenosyl-L-methionine = 2'-O-methylcytidine(34) in tRNA + S-adenosyl-L-homocysteine + H(+). It catalyses the reaction 5-carboxymethylaminomethyluridine(34) in tRNA(Leu) + S-adenosyl-L-methionine = 5-carboxymethylaminomethyl-2'-O-methyluridine(34) in tRNA(Leu) + S-adenosyl-L-homocysteine + H(+). Could methylate the ribose at the nucleotide 34 wobble position in tRNA. In Mycoplasma pneumoniae (strain ATCC 29342 / M129 / Subtype 1) (Mycoplasmoides pneumoniae), this protein is Putative tRNA (cytidine(34)-2'-O)-methyltransferase.